The primary structure comprises 170 residues: MPRSRVNGNFIDKTSSIVANILLRIIPTTSGEKKAFTYYRDGMLAQSEGNYAEALQNYYEAMRLEIDPYDRSYILYNIGLIHTSNGEHTKALEYYFRALERNPFLPQAFNNMAVICHYRGEQAILQGDSEIAEAWFDQAAEYWKQAIALTPGNYIEAQNWLKITKRFEFE.

TPR repeat units follow at residues 35-68 (AFTYYRDGMLAQSEGNYAEALQNYYEAMRLEIDP), 72-105 (SYILYNIGLIHTSNGEHTKALEYYFRALERNPFL), and 120-153 (GEQAILQGDSEIAEAWFDQAAEYWKQAIALTPGN).

This sequence belongs to the Ycf3 family.

The protein localises to the plastid. Its subcellular location is the chloroplast thylakoid membrane. Its function is as follows. Essential for the assembly of the photosystem I (PSI) complex. May act as a chaperone-like factor to guide the assembly of the PSI subunits. This chain is Photosystem I assembly protein Ycf3, found in Triticum aestivum (Wheat).